Here is a 463-residue protein sequence, read N- to C-terminus: Probable Xaa-Pro aminopeptidase PEPP (463 aa).

Asp259, Asp270, Glu393, and Glu433 together coordinate Mn(2+).

This sequence belongs to the peptidase M24B family. It depends on Mn(2+) as a cofactor.

It catalyses the reaction Release of any N-terminal amino acid, including proline, that is linked to proline, even from a dipeptide or tripeptide.. Catalyzes the removal of a penultimate prolyl residue from the N-termini of peptides. This chain is Probable Xaa-Pro aminopeptidase PEPP (PEPP), found in Phaeosphaeria nodorum (strain SN15 / ATCC MYA-4574 / FGSC 10173) (Glume blotch fungus).